Reading from the N-terminus, the 381-residue chain is Major structural protein ORF14 (381 aa).

Residues 287 to 307 (RQFKEKLNQEKDEKKRSINKE) are a coiled coil.

This chain is Major structural protein ORF14, found in Helicobacter pylori (strain 35A).